The following is a 155-amino-acid chain: Ribosomal RNA large subunit methyltransferase H (155 aa).

Residues Leu72, Gly103, and 122–127 (LSTLTL) contribute to the S-adenosyl-L-methionine site.

Belongs to the RNA methyltransferase RlmH family. Homodimer.

It is found in the cytoplasm. It carries out the reaction pseudouridine(1915) in 23S rRNA + S-adenosyl-L-methionine = N(3)-methylpseudouridine(1915) in 23S rRNA + S-adenosyl-L-homocysteine + H(+). Functionally, specifically methylates the pseudouridine at position 1915 (m3Psi1915) in 23S rRNA. This is Ribosomal RNA large subunit methyltransferase H from Klebsiella pneumoniae (strain 342).